Here is a 240-residue protein sequence, read N- to C-terminus: 4-hydroxy-tetrahydrodipicolinate reductase (240 aa).

Residues 79–81 and 103–106 contribute to the NAD(+) site; these read ATT and SANM. The Proton donor/acceptor role is filled by H135. H136 serves as a coordination point for (S)-2,3,4,5-tetrahydrodipicolinate. The active-site Proton donor is K139. 145–146 contributes to the (S)-2,3,4,5-tetrahydrodipicolinate binding site; sequence GT.

It belongs to the DapB family.

It localises to the cytoplasm. It carries out the reaction (S)-2,3,4,5-tetrahydrodipicolinate + NAD(+) + H2O = (2S,4S)-4-hydroxy-2,3,4,5-tetrahydrodipicolinate + NADH + H(+). The catalysed reaction is (S)-2,3,4,5-tetrahydrodipicolinate + NADP(+) + H2O = (2S,4S)-4-hydroxy-2,3,4,5-tetrahydrodipicolinate + NADPH + H(+). It functions in the pathway amino-acid biosynthesis; L-lysine biosynthesis via DAP pathway; (S)-tetrahydrodipicolinate from L-aspartate: step 4/4. Catalyzes the conversion of 4-hydroxy-tetrahydrodipicolinate (HTPA) to tetrahydrodipicolinate. In Staphylococcus aureus (strain USA300), this protein is 4-hydroxy-tetrahydrodipicolinate reductase.